The sequence spans 89 residues: Small ribosomal subunit protein uS15 (89 aa).

This sequence belongs to the universal ribosomal protein uS15 family. In terms of assembly, part of the 30S ribosomal subunit. Forms a bridge to the 50S subunit in the 70S ribosome, contacting the 23S rRNA.

Functionally, one of the primary rRNA binding proteins, it binds directly to 16S rRNA where it helps nucleate assembly of the platform of the 30S subunit by binding and bridging several RNA helices of the 16S rRNA. Forms an intersubunit bridge (bridge B4) with the 23S rRNA of the 50S subunit in the ribosome. The polypeptide is Small ribosomal subunit protein uS15 (Sodalis glossinidius (strain morsitans)).